We begin with the raw amino-acid sequence, 136 residues long: Large ribosomal subunit protein uL16c (136 aa).

The interval 1-20 is disordered; the sequence is MLSPKRTKFRKQHRGRMKGK.

The protein belongs to the universal ribosomal protein uL16 family. Part of the 50S ribosomal subunit.

It localises to the plastid. It is found in the chloroplast. The sequence is that of Large ribosomal subunit protein uL16c from Brachypodium distachyon (Purple false brome).